The chain runs to 923 residues: Calmodulin-binding transcription activator 5 (923 aa).

The CG-1 DNA-binding region spans 25–151 (IQTMLDEAYS…YRETHEVHAA (127 aa)). The tract at residues 272-372 (VYQNNNSCGA…HSHSDIPEQV (101 aa)) is transcription activation. The stretch at 611–640 (QGWTALHWAAYYGREKMVAALLSAGARPNL) is one ANK repeat. IQ domains are found at residues 757 to 786 (NIIA…IQYR), 799 to 828 (MRKK…SVGV), and 875 to 904 (LERS…AHEE). Residues 824 to 846 (WSVGVLEKAILRWRLKRKGFRGL) form a calmodulin-binding region. A coiled-coil region spans residues 887–914 (RSKKAQQDYRRMKLAHEEAQLEYDGMQE).

It belongs to the CAMTA family. Expressed in roots, stems, leaves, pollen, top of sepals and siliques.

It localises to the nucleus. Its function is as follows. Transcription activator. Binds to the DNA consensus sequence 5'-[ACG]CGCG[GTC]-3'. Regulates transcriptional activity in response to calcium signals. Binds calmodulin in a calcium-dependent manner. Involved in response to cold. Contributes together with CAMTA3 to the positive regulation of the cold-induced expression of DREB1A/CBF3, DREB1B/CBF1 and DREB1C/CBF2. This is Calmodulin-binding transcription activator 5 from Arabidopsis thaliana (Mouse-ear cress).